The following is a 484-amino-acid chain: Bifunctional protein HldE (484 aa).

The interval 1-320 (MDFSSITVLC…AELNAQDADA (320 aa)) is ribokinase. 195 to 198 (NARE) is a binding site for ATP. Asp265 is an active-site residue. Residues 349–484 (FTNGCFDIIH…RIRAAGAADR (136 aa)) form a cytidylyltransferase region.

In the N-terminal section; belongs to the carbohydrate kinase PfkB family. The protein in the C-terminal section; belongs to the cytidylyltransferase family. Homodimer.

It catalyses the reaction D-glycero-beta-D-manno-heptose 7-phosphate + ATP = D-glycero-beta-D-manno-heptose 1,7-bisphosphate + ADP + H(+). The catalysed reaction is D-glycero-beta-D-manno-heptose 1-phosphate + ATP + H(+) = ADP-D-glycero-beta-D-manno-heptose + diphosphate. It participates in nucleotide-sugar biosynthesis; ADP-L-glycero-beta-D-manno-heptose biosynthesis; ADP-L-glycero-beta-D-manno-heptose from D-glycero-beta-D-manno-heptose 7-phosphate: step 1/4. It functions in the pathway nucleotide-sugar biosynthesis; ADP-L-glycero-beta-D-manno-heptose biosynthesis; ADP-L-glycero-beta-D-manno-heptose from D-glycero-beta-D-manno-heptose 7-phosphate: step 3/4. Its function is as follows. Catalyzes the phosphorylation of D-glycero-D-manno-heptose 7-phosphate at the C-1 position to selectively form D-glycero-beta-D-manno-heptose-1,7-bisphosphate. Functionally, catalyzes the ADP transfer from ATP to D-glycero-beta-D-manno-heptose 1-phosphate, yielding ADP-D-glycero-beta-D-manno-heptose. This Gluconacetobacter diazotrophicus (strain ATCC 49037 / DSM 5601 / CCUG 37298 / CIP 103539 / LMG 7603 / PAl5) protein is Bifunctional protein HldE.